The chain runs to 452 residues: 3-phosphoshikimate 1-carboxyvinyltransferase (452 aa).

Positions 1-17 (MSHAAAAKPATARKSQA) are enriched in low complexity. The disordered stretch occupies residues 1-26 (MSHAAAAKPATARKSQALSGTARVPG). Positions 28, 29, and 33 each coordinate 3-phosphoshikimate. K28 provides a ligand contact to phosphoenolpyruvate. The phosphoenolpyruvate site is built by G100 and R128. Positions 174, 176, 327, and 354 each coordinate 3-phosphoshikimate. Residue Q176 coordinates phosphoenolpyruvate. Residue D327 is the Proton acceptor of the active site. Phosphoenolpyruvate-binding residues include R358 and R409.

This sequence belongs to the EPSP synthase family. As to quaternary structure, monomer.

It localises to the cytoplasm. The catalysed reaction is 3-phosphoshikimate + phosphoenolpyruvate = 5-O-(1-carboxyvinyl)-3-phosphoshikimate + phosphate. It participates in metabolic intermediate biosynthesis; chorismate biosynthesis; chorismate from D-erythrose 4-phosphate and phosphoenolpyruvate: step 6/7. Catalyzes the transfer of the enolpyruvyl moiety of phosphoenolpyruvate (PEP) to the 5-hydroxyl of shikimate-3-phosphate (S3P) to produce enolpyruvyl shikimate-3-phosphate and inorganic phosphate. This chain is 3-phosphoshikimate 1-carboxyvinyltransferase, found in Mesorhizobium japonicum (strain LMG 29417 / CECT 9101 / MAFF 303099) (Mesorhizobium loti (strain MAFF 303099)).